We begin with the raw amino-acid sequence, 288 residues long: 4-diphosphocytidyl-2-C-methyl-D-erythritol kinase (288 aa).

K11 is a catalytic residue. 100–110 (PTSAGLGSGSS) serves as a coordination point for ATP. The active site involves D140.

It belongs to the GHMP kinase family. IspE subfamily.

It carries out the reaction 4-CDP-2-C-methyl-D-erythritol + ATP = 4-CDP-2-C-methyl-D-erythritol 2-phosphate + ADP + H(+). It participates in isoprenoid biosynthesis; isopentenyl diphosphate biosynthesis via DXP pathway; isopentenyl diphosphate from 1-deoxy-D-xylulose 5-phosphate: step 3/6. Functionally, catalyzes the phosphorylation of the position 2 hydroxy group of 4-diphosphocytidyl-2C-methyl-D-erythritol. This is 4-diphosphocytidyl-2-C-methyl-D-erythritol kinase from Wolbachia sp. subsp. Brugia malayi (strain TRS).